A 214-amino-acid chain; its full sequence is Osteoclast-stimulating factor 1 (214 aa).

Residues 12–71 form the SH3 domain; the sequence is GQVKVYRALFTFDPRTPDELYFEEGDILYISDTSDSNWWKGTCRGRTGLIPSNYVAEQAE. ANK repeat units lie at residues 72–101, 105–135, and 139–168; these read SIDN…GING, AGNT…ELNQ, and LGDT…RTDV.

It localises to the cytoplasm. Functionally, induces bone resorption, acting probably through a signaling cascade which results in the secretion of factor(s) enhancing osteoclast formation and activity. This is Osteoclast-stimulating factor 1 (ostf1) from Danio rerio (Zebrafish).